The primary structure comprises 227 residues: 6-phosphogluconolactonase (227 aa).

Belongs to the glucosamine/galactosamine-6-phosphate isomerase family. 6-phosphogluconolactonase subfamily.

The enzyme catalyses 6-phospho-D-glucono-1,5-lactone + H2O = 6-phospho-D-gluconate + H(+). The protein operates within carbohydrate degradation; pentose phosphate pathway; D-ribulose 5-phosphate from D-glucose 6-phosphate (oxidative stage): step 2/3. Functionally, hydrolysis of 6-phosphogluconolactone to 6-phosphogluconate. This is 6-phosphogluconolactonase (pgl) from Helicobacter pylori (strain ATCC 700392 / 26695) (Campylobacter pylori).